A 468-amino-acid polypeptide reads, in one-letter code: 3-isopropylmalate dehydratase large subunit (468 aa).

Residues cysteine 347, cysteine 408, and cysteine 411 each coordinate [4Fe-4S] cluster.

The protein belongs to the aconitase/IPM isomerase family. LeuC type 1 subfamily. Heterodimer of LeuC and LeuD. [4Fe-4S] cluster is required as a cofactor.

The catalysed reaction is (2R,3S)-3-isopropylmalate = (2S)-2-isopropylmalate. The protein operates within amino-acid biosynthesis; L-leucine biosynthesis; L-leucine from 3-methyl-2-oxobutanoate: step 2/4. In terms of biological role, catalyzes the isomerization between 2-isopropylmalate and 3-isopropylmalate, via the formation of 2-isopropylmaleate. The protein is 3-isopropylmalate dehydratase large subunit of Methylobacillus flagellatus (strain ATCC 51484 / DSM 6875 / VKM B-1610 / KT).